We begin with the raw amino-acid sequence, 290 residues long: Phosphoribosylaminoimidazole-succinocarboxamide synthase (290 aa).

Belongs to the SAICAR synthetase family.

The enzyme catalyses 5-amino-1-(5-phospho-D-ribosyl)imidazole-4-carboxylate + L-aspartate + ATP = (2S)-2-[5-amino-1-(5-phospho-beta-D-ribosyl)imidazole-4-carboxamido]succinate + ADP + phosphate + 2 H(+). Its pathway is purine metabolism; IMP biosynthesis via de novo pathway; 5-amino-1-(5-phospho-D-ribosyl)imidazole-4-carboxamide from 5-amino-1-(5-phospho-D-ribosyl)imidazole-4-carboxylate: step 1/2. In Haemophilus influenzae (strain ATCC 51907 / DSM 11121 / KW20 / Rd), this protein is Phosphoribosylaminoimidazole-succinocarboxamide synthase (purC).